The chain runs to 729 residues: Transient receptor potential cation channel subfamily V member 5 (729 aa).

Topologically, residues 1–327 are cytoplasmic; the sequence is MGGFLPKAEG…SFKWNKYGRP (327 aa). ANK repeat units lie at residues 44–74, 78–107, 116–145, 162–191, 195–228, and 239–268; these read ILES…DVRQ, LGET…ELVF, AGQT…SVSA, FGEH…DIRA, LGNT…HGDH, and QGLT…HIQW. The chain crosses the membrane as a helical span at residues 328-348; the sequence is YFCILAALYLLYMICFTTCCV. The Extracellular segment spans residues 349–385; that stretch reads YRPLKFRGGNRTHSRDITILQQKLLQEAYETREDIIR. Residue asparagine 358 is glycosylated (N-linked (GlcNAc...) asparagine). A helical transmembrane segment spans residues 386–408; the sequence is LVGELVSIVGAVIILLLEIPDIF. Residues 409–419 are Cytoplasmic-facing; it reads RVGASRYFGKT. Residues 420 to 442 form a helical membrane-spanning segment; that stretch reads ILGGPFHVIIITYASLVLVTMVM. The Extracellular portion of the chain corresponds to 443–448; it reads RLTNTN. A helical membrane pass occupies residues 449-469; it reads GEVVPMSFALVLGWCSVMYFT. The Cytoplasmic segment spans residues 470 to 492; the sequence is RGFQMLGPFTIMIQKMIFGDLMR. Residues 493–513 traverse the membrane as a helical segment; sequence FCWLMAVVILGFASAFYIIFQ. Residues 524–544 constitute an intramembrane region (pore-forming); that stretch reads YDYPMALFTTFELFLTVIDAP. Aspartate 542 contributes to the Ca(2+) binding site. A helical membrane pass occupies residues 557-577; that stretch reads IVNFAFTIIATLLMLNLFIAM. Topologically, residues 578-729 are cytoplasmic; it reads MGDTHWRVAQ…EGDGEEVYHF (152 aa). Positions 598–602 are interaction with S100A10; that stretch reads VATTV. The involved in Ca(2+)-dependent inactivation stretch occupies residues 650 to 653; the sequence is VFKN. The segment covering 654 to 665 has biased composition (basic and acidic residues); that stretch reads SDKEDDQEHPSE. Residues 654–675 are disordered; sequence SDKEDDQEHPSEKQPSGAESGT. Phosphothreonine is present on threonine 685. At serine 689 the chain carries Phosphoserine. Residues 700–729 form an involved in Ca(2+)-dependent inactivation region; sequence GWEILRQNTLGHLNLGLNLSEGDGEEVYHF.

This sequence belongs to the transient receptor (TC 1.A.4) family. TrpV subfamily. TRPV5 sub-subfamily. As to quaternary structure, homotetramer and probably heterotetramer with TRPV6. Interacts with TRPV6. Interacts with S100A10 and probably with the ANAX2-S100A10 heterotetramer. The interaction with S100A10 is required for the trafficking to the plasma membrane. Interacts with calmodulin. Interacts with BSPRY, which results in its inactivation. Post-translationally, glycosylated. In terms of tissue distribution, expressed at high levels in kidney, small intestine and pancreas, and at lower levels in testis, prostate, placenta, brain, colon and rectum.

Its subcellular location is the apical cell membrane. It catalyses the reaction Ca(2+)(in) = Ca(2+)(out). Activated by WNK3. In terms of biological role, constitutively active calcium selective cation channel thought to be involved in Ca(2+) reabsorption in kidney and intestine. Required for normal Ca(2+) reabsorption in the kidney distal convoluted tubules. The channel is activated by low internal calcium level and the current exhibits an inward rectification. A Ca(2+)-dependent feedback regulation includes fast channel inactivation and slow current decay. Heteromeric assembly with TRPV6 seems to modify channel properties. TRPV5-TRPV6 heteromultimeric concatemers exhibit voltage-dependent gating. The chain is Transient receptor potential cation channel subfamily V member 5 (TRPV5) from Homo sapiens (Human).